The sequence spans 804 residues: Mechanosensitive cation channel TMEM63A (804 aa).

At 1–51 (MTSSPFLDPWPSKAVFVRERLGLGERPNDSYCYNSAKNSTVLQGVTFGGIP) the chain is on the extracellular side. The N-linked (GlcNAc...) asparagine glycan is linked to asparagine 38. The chain crosses the membrane as a helical span at residues 52–74 (TVLLLDVSCFLFLILVFSIIRRR). Over 75–133 (FWDYGRIALVSEAGSEARFQRLSSSSSGQQDFENELGCCPWLTAIFRLHDDQILEWCGE) the chain is Cytoplasmic. Residues 134–166 (DAIHYLSFQRHIIFLLVVISFLSLCVILPVNLS) form a helical membrane-spanning segment. Over 167-190 (GDLLGKDPYSFGRTTIANLQTDND) the chain is Extracellular. A helical membrane pass occupies residues 191–216 (LLWLHTVFSVIYLFLTVGFMWHHTRS). Over 217-415 (IRYKEESLVR…CWKNLSIQGV (199 aa)) the chain is Cytoplasmic. An intracellular linker IL2; confers mechanosensitivity region spans residues 218–413 (RYKEESLVRQ…DICWKNLSIQ (196 aa)). The chain crosses the membrane as a helical span at residues 416 to 443 (RWWLQWLGINFSLFVVLFFLTTPSIIMS). Over 444–461 (TMDKFNVTKPIHALNNPV) the chain is Extracellular. N-linked (GlcNAc...) asparagine glycosylation is present at asparagine 449. The chain crosses the membrane as a helical span at residues 462 to 489 (ISQFFPTLLLWSFSALLPSIVYYSTLLE). At 490-494 (SHWTR) the chain is on the cytoplasmic side. Residues 495–531 (SGENRIMVSKVYIFLIFMVLILPSLGLTSLDFFFRWL) traverse the membrane as a helical segment. Residues 532-553 (FDKTSSETSIRLECVFLPDQGA) are Extracellular-facing. The chain crosses the membrane as a helical span at residues 554-585 (FFVNYVIASAFIGSGMELLRLPGLILYTFRMI). Positions 554–585 (FFVNYVIASAFIGSGMELLRLPGLILYTFRMI) are gating helix. Residues 586-605 (MAKTAADRRNVKQNQAFEYE) lie on the Cytoplasmic side of the membrane. The helical transmembrane segment at 606-623 (FGAMYAWMLCVFTVIMAY) threads the bilayer. At 624–627 (SITC) the chain is on the extracellular side. A helical membrane pass occupies residues 628-650 (PIIVPFGLIYILLKHMVDRHNLY). At 651 to 660 (FAYLPAKLEK) the chain is on the cytoplasmic side. Residues 661 to 688 (RIHFAAVNQALAAPILCLFWLFFFSFLR) form a helical membrane-spanning segment. Over 689-693 (LGLTA) the chain is Extracellular. A helical membrane pass occupies residues 694 to 708 (PATLFTFLVVLLTIL). Topologically, residues 709 to 804 (ACLLYTCFGC…GTAAYAYQES (96 aa)) are cytoplasmic. Serine 738 carries the post-translational modification Phosphoserine.

It belongs to the CSC1 (TC 1.A.17) family. As to quaternary structure, monomer. In terms of processing, N-Glycosylated.

It is found in the lysosome membrane. The protein localises to the early endosome membrane. Its subcellular location is the cell membrane. It carries out the reaction Ca(2+)(in) = Ca(2+)(out). Its function is as follows. Mechanosensitive cation channel with low conductance and high activation threshold. In contrast to TMEM63B, does not show phospholipid scramblase activity. Acts as a regulator of lysosomal morphology by mediating lysosomal mechanosensitivity. Important for the baby's first breath and respiration throughout life. Upon lung inflation conducts cation currents in alveolar type 1 and 2 cells triggering lamellar body exocytosis and surfactant secretion into airspace. Also acts as an osmosensitive cation channel preferentially activated by hypotonic stress. This is Mechanosensitive cation channel TMEM63A from Mus musculus (Mouse).